The sequence spans 449 residues: UDP-N-acetylmuramoylalanine--D-glutamate ligase (449 aa).

118 to 124 (GTNGKTT) serves as a coordination point for ATP.

This sequence belongs to the MurCDEF family.

The protein localises to the cytoplasm. It carries out the reaction UDP-N-acetyl-alpha-D-muramoyl-L-alanine + D-glutamate + ATP = UDP-N-acetyl-alpha-D-muramoyl-L-alanyl-D-glutamate + ADP + phosphate + H(+). It participates in cell wall biogenesis; peptidoglycan biosynthesis. Its function is as follows. Cell wall formation. Catalyzes the addition of glutamate to the nucleotide precursor UDP-N-acetylmuramoyl-L-alanine (UMA). In Staphylococcus epidermidis (strain ATCC 12228 / FDA PCI 1200), this protein is UDP-N-acetylmuramoylalanine--D-glutamate ligase.